The following is a 158-amino-acid chain: 6,7-dimethyl-8-ribityllumazine synthase (158 aa).

Residues phenylalanine 22, alanine 57 to glutamate 59, and alanine 81 to isoleucine 83 each bind 5-amino-6-(D-ribitylamino)uracil. Glycine 86–threonine 87 serves as a coordination point for (2S)-2-hydroxy-3-oxobutyl phosphate. Catalysis depends on histidine 89, which acts as the Proton donor. A 5-amino-6-(D-ribitylamino)uracil-binding site is contributed by phenylalanine 114. Arginine 128 serves as a coordination point for (2S)-2-hydroxy-3-oxobutyl phosphate.

This sequence belongs to the DMRL synthase family. In terms of assembly, forms an icosahedral capsid composed of 60 subunits, arranged as a dodecamer of pentamers.

It carries out the reaction (2S)-2-hydroxy-3-oxobutyl phosphate + 5-amino-6-(D-ribitylamino)uracil = 6,7-dimethyl-8-(1-D-ribityl)lumazine + phosphate + 2 H2O + H(+). It functions in the pathway cofactor biosynthesis; riboflavin biosynthesis; riboflavin from 2-hydroxy-3-oxobutyl phosphate and 5-amino-6-(D-ribitylamino)uracil: step 1/2. In terms of biological role, catalyzes the formation of 6,7-dimethyl-8-ribityllumazine by condensation of 5-amino-6-(D-ribitylamino)uracil with 3,4-dihydroxy-2-butanone 4-phosphate. This is the penultimate step in the biosynthesis of riboflavin. The sequence is that of 6,7-dimethyl-8-ribityllumazine synthase from Shewanella oneidensis (strain ATCC 700550 / JCM 31522 / CIP 106686 / LMG 19005 / NCIMB 14063 / MR-1).